A 477-amino-acid chain; its full sequence is Salivary plasminogen activator alpha 1 (477 aa).

An N-terminal signal peptide occupies residues 1-36 (MVNTMKTKLLCVLLLCGAVFSLPRQETYRQLARGSR). One can recognise a Fibronectin type-I domain in the interval 40 to 82 (VACKDEITQMTYRRQESWLRPEVRSKRVEHCQCDRGQARCHTV). Cystine bridges form between Cys-42–Cys-72, Cys-70–Cys-79, Cys-87–Cys-98, Cys-92–Cys-109, Cys-111–Cys-120, Cys-128–Cys-209, Cys-149–Cys-191, Cys-180–Cys-204, Cys-214–Cys-345, Cys-257–Cys-273, Cys-265–Cys-334, Cys-359–Cys-434, Cys-391–Cys-407, and Cys-424–Cys-452. The region spanning 83–121 (PVNSCSEPRCFNGGTCWQAVYFSDFVCQCPAGYTGKRCE) is the EGF-like domain. The region spanning 128–209 (CYEGQGVTYR…TSESCSVPVC (82 aa)) is the Kringle domain. N-linked (GlcNAc...) asparagine glycosylation occurs at Asn-153. One can recognise a Peptidase S1 domain in the interval 226–476 (STGGLFTDIT…YLGWIRDNMH (251 aa)). Residues His-272 and Asp-321 each act as charge relay system in the active site. Asn-398 is a glycosylation site (N-linked (GlcNAc...) asparagine). The Charge relay system role is filled by Ser-428.

Belongs to the peptidase S1 family. Monomer.

It localises to the secreted. It carries out the reaction Specific cleavage of Arg-|-Val bond in plasminogen to form plasmin.. Its activity is regulated as follows. Activity toward plasminogen is stimulated in the presence of fibrin I. In terms of biological role, probably essential to support the feeding habits of this exclusively haematophagous animal. Potent thrombolytic agent. The polypeptide is Salivary plasminogen activator alpha 1 (Desmodus rotundus (Vampire bat)).